We begin with the raw amino-acid sequence, 193 residues long: Ion-translocating oxidoreductase complex subunit A (193 aa).

Helical transmembrane passes span 5-25 (LLLF…FLGL), 39-59 (MGMG…AWLI), 63-83 (ILIP…VIAV), 102-122 (LLGI…VALL), 134-154 (ALYG…FAAI), and 171-191 (AIAL…SGLV).

It belongs to the NqrDE/RnfAE family. The complex is composed of six subunits: RsxA, RsxB, RsxC, RsxD, RsxE and RsxG.

It is found in the cell inner membrane. Functionally, part of a membrane-bound complex that couples electron transfer with translocation of ions across the membrane. Required to maintain the reduced state of SoxR. The chain is Ion-translocating oxidoreductase complex subunit A from Shigella flexneri serotype 5b (strain 8401).